Here is a 350-residue protein sequence, read N- to C-terminus: Probable flap endonuclease 1 homolog (350 aa).

The interval 1–95 (MGITKLAHLI…AVLEKRAQST (95 aa)) is N-domain. Mg(2+) is bound at residue aspartate 34. Arginine 61 serves as a coordination point for DNA. Mg(2+)-binding residues include aspartate 77, glutamate 130, glutamate 132, aspartate 151, and aspartate 153. Positions 110 to 223 (NQECLRLLHL…SRALKLIKEH (114 aa)) are I-domain. Glutamate 130 contributes to the DNA binding site. DNA contacts are provided by glycine 201 and aspartate 203. Aspartate 203 provides a ligand contact to Mg(2+). An interaction with PCNA region spans residues 317 to 325 (RQSRLEDFF).

It belongs to the XPG/RAD2 endonuclease family. FEN1 subfamily. As to quaternary structure, interacts with PCNA. Three molecules of fen1 bind to one PCNA trimer with each molecule binding to one PCNA monomer. PCNA stimulates the nuclease activity without altering cleavage specificity. It depends on Mg(2+) as a cofactor. Post-translationally, phosphorylated. Phosphorylation upon DNA damage induces relocalization to the nuclear plasma.

Its subcellular location is the nucleus. It is found in the nucleolus. The protein resides in the nucleoplasm. The protein localises to the mitochondrion. In terms of biological role, structure-specific nuclease with 5'-flap endonuclease and 5'-3' exonuclease activities involved in DNA replication and repair. During DNA replication, cleaves the 5'-overhanging flap structure that is generated by displacement synthesis when DNA polymerase encounters the 5'-end of a downstream Okazaki fragment. It enters the flap from the 5'-end and then tracks to cleave the flap base, leaving a nick for ligation. Also involved in the long patch base excision repair (LP-BER) pathway, by cleaving within the apurinic/apyrimidinic (AP) site-terminated flap. Acts as a genome stabilization factor that prevents flaps from equilibrating into structures that lead to duplications and deletions. Also possesses 5'-3' exonuclease activity on nicked or gapped double-stranded DNA, and exhibits RNase H activity. Also involved in replication and repair of rDNA and in repairing mitochondrial DNA. This Danio rerio (Zebrafish) protein is Probable flap endonuclease 1 homolog.